Consider the following 455-residue polypeptide: E3 ubiquitin-protein ligase IPI1 (455 aa).

The disordered stretch occupies residues 1–42 (MGAEEEEEPASAVGREGGGGGGGARAAGAGAGGDTADDDDSG). Gly residues predominate over residues 15 to 33 (REGGGGGGGARAAGAGAGG). The RING-type; atypical zinc finger occupies 51 to 97 (CSICLDAVVAGGGDRSTARLQCGHEFHLDCIGSAFNAKGVMQCPNCR). Disordered stretches follow at residues 286–311 (LDSD…SRIP) and 426–455 (QWIG…IPRM). Positions 433–442 (SPPPPPPPPA) are enriched in pro residues.

In terms of assembly, interacts with SPL14/IPA1.

The protein localises to the nucleus. The catalysed reaction is S-ubiquitinyl-[E2 ubiquitin-conjugating enzyme]-L-cysteine + [acceptor protein]-L-lysine = [E2 ubiquitin-conjugating enzyme]-L-cysteine + N(6)-ubiquitinyl-[acceptor protein]-L-lysine.. It functions in the pathway protein modification; protein ubiquitination. Its function is as follows. Functions as an E3 ligase that promotes polyubiquitination of SPL14/IPA1 for subsequent proteasomal degradation. Regulates plant architecture by modulating SPL14/IPA1 abundance. Promotes the degradation of SPL14/IPA1 in panicles, while it stabilizes SPL14/IPA1 in shoot apices. Ubiquitinates the SPL14/IPA1-mediated complex with 'Lys-48'-linked polyubiquitin in panicles and 'Lys-63'-linked polyubiquitin chains in the shoot apex. This Oryza sativa subsp. japonica (Rice) protein is E3 ubiquitin-protein ligase IPI1.